Reading from the N-terminus, the 365-residue chain is Phosphoserine aminotransferase (365 aa).

Arginine 40 contributes to the L-glutamate binding site. Residues 74–75 (AS), phenylalanine 99, threonine 155, aspartate 177, and glutamine 200 contribute to the pyridoxal 5'-phosphate site. Lysine 201 carries the post-translational modification N6-(pyridoxal phosphate)lysine. 241 to 242 (NT) is a pyridoxal 5'-phosphate binding site.

It belongs to the class-V pyridoxal-phosphate-dependent aminotransferase family. SerC subfamily. In terms of assembly, homodimer. It depends on pyridoxal 5'-phosphate as a cofactor.

It is found in the cytoplasm. It catalyses the reaction O-phospho-L-serine + 2-oxoglutarate = 3-phosphooxypyruvate + L-glutamate. The enzyme catalyses 4-(phosphooxy)-L-threonine + 2-oxoglutarate = (R)-3-hydroxy-2-oxo-4-phosphooxybutanoate + L-glutamate. The protein operates within amino-acid biosynthesis; L-serine biosynthesis; L-serine from 3-phospho-D-glycerate: step 2/3. Its function is as follows. Catalyzes the reversible conversion of 3-phosphohydroxypyruvate to phosphoserine and of 3-hydroxy-2-oxo-4-phosphonooxybutanoate to phosphohydroxythreonine. The sequence is that of Phosphoserine aminotransferase from Lactococcus lactis subsp. lactis (strain IL1403) (Streptococcus lactis).